The sequence spans 354 residues: Methylthioribose-1-phosphate isomerase (354 aa).

Residues 54 to 56 (RGA), R97, and Q204 each bind substrate. The active-site Proton donor is D245. 255 to 256 (NK) lines the substrate pocket.

It belongs to the eIF-2B alpha/beta/delta subunits family. MtnA subfamily.

It catalyses the reaction 5-(methylsulfanyl)-alpha-D-ribose 1-phosphate = 5-(methylsulfanyl)-D-ribulose 1-phosphate. The protein operates within amino-acid biosynthesis; L-methionine biosynthesis via salvage pathway; L-methionine from S-methyl-5-thio-alpha-D-ribose 1-phosphate: step 1/6. Functionally, catalyzes the interconversion of methylthioribose-1-phosphate (MTR-1-P) into methylthioribulose-1-phosphate (MTRu-1-P). This is Methylthioribose-1-phosphate isomerase from Albidiferax ferrireducens (strain ATCC BAA-621 / DSM 15236 / T118) (Rhodoferax ferrireducens).